The chain runs to 105 residues: Cyclotide vibi-E (105 aa).

The first 9 residues, 1-9 (AAFALPALA), serve as a signal peptide directing secretion. The propeptide occupies 10 to 69 (SSFEKDVISFRAIQAVLEKRGLSKLEDDPVLSALAHTKTIISNPVIEEALLNGANLKAGN). A cross-link (cyclopeptide (Gly-Asn)) is located at residues 70–99 (GIPCAESCVWIPCTVTALIGCGCSNKVCYN). 3 cysteine pairs are disulfide-bonded: C73–C90, C77–C92, and C82–C97. The propeptide occupies 100–105 (SLQTKY).

This is a cyclic peptide.

Its function is as follows. Probably participates in a plant defense mechanism. Has cytotoxic activity, active against a human lymphoma cell line with an IC(50) of 3.2 uM. This Viola biflora (Yellow wood violet) protein is Cyclotide vibi-E.